The primary structure comprises 217 residues: NADH dehydrogenase (ubiquinone) 23 kDa subunit (217 aa).

The N-terminal 26 residues, 1–26 (MSLTMRIFTASRNGQRLFGSHGARLL), are a transit peptide targeting the mitochondrion. 4Fe-4S ferredoxin-type domains lie at 109 to 138 (RRYPSGEERCIACKLCEAICPAQAITIEAE) and 148 to 177 (TRYDIDMTKCIYCGFCQEACPVDAIVEGPN). Residues Cys-118, Cys-121, Cys-124, Cys-128, Cys-157, Cys-160, Cys-163, and Cys-167 each contribute to the [4Fe-4S] cluster site.

It belongs to the complex I 23 kDa subunit family. Part of the mitochondrial membrane respiratory chain NADH dehydrogenase (Complex I). This is a component of the iron-sulfur (IP) fragment of the enzyme. [4Fe-4S] cluster is required as a cofactor. Expressed in muscles (at protein level).

The protein resides in the mitochondrion. The enzyme catalyses a ubiquinone + NADH + 5 H(+)(in) = a ubiquinol + NAD(+) + 4 H(+)(out). In terms of biological role, core subunit of the mitochondrial membrane respiratory chain NADH dehydrogenase (Complex I) that is believed to belong to the minimal assembly required for catalysis. Complex I functions in the transfer of electrons from NADH to the respiratory chain. The immediate electron acceptor for the enzyme is believed to be ubiquinone. This Drosophila melanogaster (Fruit fly) protein is NADH dehydrogenase (ubiquinone) 23 kDa subunit.